Here is a 443-residue protein sequence, read N- to C-terminus: Threonine/serine transporter TdcC (443 aa).

11 consecutive transmembrane segments (helical) span residues 22–42 (TTWTLGLFGTAIGAGVLFFPI), 44–64 (AGFGGLIPILLMLVLAYPIAF), 97–117 (GVVITFLYFFAICPLLWIYGV), 140–160 (VVALFLLLLMAFVIWFGKDLM), 163–183 (VMSYLVWPFIASLVLISLSLI), 207–227 (ILVTVWLGISIMVFSFNFSPI), 259–279 (ASMLMVAVVMFFAFSCLFTLS), 319–339 (ASIIALVAIFKSFFGHYLGTL), 366–386 (ISMIFIMGSTWIVAYANPNIL), 389–409 (IEAMGAPIIASLLCLLPMYAI), and 423–443 (DNVFVTLIGLLTILNIVYKLF).

This sequence belongs to the amino acid/polyamine transporter 2 family. SdaC/TdcC subfamily.

It localises to the cell inner membrane. It carries out the reaction L-threonine(in) + H(+)(in) = L-threonine(out) + H(+)(out). The enzyme catalyses L-serine(in) + H(+)(in) = L-serine(out) + H(+)(out). In terms of biological role, involved in the import of threonine and serine into the cell, with the concomitant import of a proton (symport system). This is Threonine/serine transporter TdcC from Salmonella arizonae (strain ATCC BAA-731 / CDC346-86 / RSK2980).